Here is a 223-residue protein sequence, read N- to C-terminus: MDELKKLAGVTAAKYVKNGMIVGLGTGSTAYFFVEEIGRRVKEEGLQVVGVTTSNRTTEQARGLAIPLKSADDIDVIDVTVDGADEVDPDFNGIKGGGGALLMEKIVATPTKEYIWVVDESKLVETLGAFKLPVEVVRYGSERLFRVFKSKGYCPSFRETEGDRFITDMGNYIIDLDLKKIEDPKQLANELDHTVGVVEHGLFNGMVNKVIVAGKNGLDILEK.

Residues 26-29, 82-85, and 95-98 contribute to the substrate site; these read TGST, DGAD, and KGGG. Glu-104 (proton acceptor) is an active-site residue. Lys-122 contributes to the substrate binding site.

It belongs to the ribose 5-phosphate isomerase family. In terms of assembly, homodimer.

The catalysed reaction is aldehydo-D-ribose 5-phosphate = D-ribulose 5-phosphate. Its pathway is carbohydrate degradation; pentose phosphate pathway; D-ribose 5-phosphate from D-ribulose 5-phosphate (non-oxidative stage): step 1/1. Its function is as follows. Catalyzes the reversible conversion of ribose-5-phosphate to ribulose 5-phosphate. The sequence is that of Ribose-5-phosphate isomerase A from Streptococcus agalactiae serotype Ia (strain ATCC 27591 / A909 / CDC SS700).